Reading from the N-terminus, the 385-residue chain is MIRFTTAGESHGEGLFVIIEGIPAGLTINSEDIDLELARRQKGYGRGQRMCIETDTVKVFSGMRHTVSLGSPIAMYIANKDFKNWTKIMSPTSVDSEVTPLLRPRPGHADLPGFMKYGVNDFRDILERASARETAARVAAGAVCKALLKEFEISIVSYTSQIGDVTADISSVEECKIWHDAEISCVRCPDAKASEKMIQLIKKAGEKGDTLGGKVVVVTKNVPAGLGSHTQWDLKLDGRLAQSLISIQAVKAVEFGAGTKLASLLGALSHDEIFYDVTRGFYRDTNRAGGIEGGMSNGEPIVVTCTMKAIPSLANPLHSVNLATKETAEAEAIRSDVCAVPAVGIVAEAAIAVELAKALKEKFGGDSLKDMKKNVNIYKERIKAL.

R40 and R46 together coordinate NADP(+). FMN contacts are provided by residues 128–130, 248–249, G293, 308–312, and R334; these read RAS, QA, and KAIPS.

It belongs to the chorismate synthase family. In terms of assembly, homotetramer. FMNH2 serves as cofactor.

The enzyme catalyses 5-O-(1-carboxyvinyl)-3-phosphoshikimate = chorismate + phosphate. It functions in the pathway metabolic intermediate biosynthesis; chorismate biosynthesis; chorismate from D-erythrose 4-phosphate and phosphoenolpyruvate: step 7/7. Its function is as follows. Catalyzes the anti-1,4-elimination of the C-3 phosphate and the C-6 proR hydrogen from 5-enolpyruvylshikimate-3-phosphate (EPSP) to yield chorismate, which is the branch point compound that serves as the starting substrate for the three terminal pathways of aromatic amino acid biosynthesis. This reaction introduces a second double bond into the aromatic ring system. The polypeptide is Chorismate synthase (Endomicrobium trichonymphae).